A 145-amino-acid chain; its full sequence is Superoxide dismutase [Mn/Fe] (145 aa).

Residues His10 and His64 each coordinate Fe(3+). Residues His10 and His64 each coordinate Mn(2+).

Belongs to the iron/manganese superoxide dismutase family. Requires Mn(2+) as cofactor. It depends on Fe(3+) as a cofactor.

It catalyses the reaction 2 superoxide + 2 H(+) = H2O2 + O2. Destroys superoxide anion radicals which are normally produced within the cells and which are toxic to biological systems. Catalyzes the dismutation of superoxide anion radicals into O2 and H2O2 by successive reduction and oxidation of the transition metal ion at the active site. The chain is Superoxide dismutase [Mn/Fe] (sodA) from Streptococcus iniae (Streptococcus shiloi).